Consider the following 428-residue polypeptide: 3-phosphoshikimate 1-carboxyvinyltransferase (428 aa).

K21, S22, and R26 together coordinate 3-phosphoshikimate. Residue K21 participates in phosphoenolpyruvate binding. Residues G91 and R119 each contribute to the phosphoenolpyruvate site. 3-phosphoshikimate is bound by residues S164, Q166, D313, and K340. Q166 contacts phosphoenolpyruvate. D313 functions as the Proton acceptor in the catalytic mechanism. Phosphoenolpyruvate contacts are provided by R344 and R386.

This sequence belongs to the EPSP synthase family. As to quaternary structure, monomer.

It is found in the cytoplasm. The enzyme catalyses 3-phosphoshikimate + phosphoenolpyruvate = 5-O-(1-carboxyvinyl)-3-phosphoshikimate + phosphate. It functions in the pathway metabolic intermediate biosynthesis; chorismate biosynthesis; chorismate from D-erythrose 4-phosphate and phosphoenolpyruvate: step 6/7. Functionally, catalyzes the transfer of the enolpyruvyl moiety of phosphoenolpyruvate (PEP) to the 5-hydroxyl of shikimate-3-phosphate (S3P) to produce enolpyruvyl shikimate-3-phosphate and inorganic phosphate. The chain is 3-phosphoshikimate 1-carboxyvinyltransferase from Campylobacter jejuni subsp. jejuni serotype O:6 (strain 81116 / NCTC 11828).